The chain runs to 317 residues: 8-oxo-(d)GTP phosphatase (317 aa).

Positions 15-148 constitute a Nudix hydrolase domain; it reads RIVYAAGAVL…DRKVLCRFAK (134 aa). Residues 43–46, Asp-48, and 53–55 each bind substrate; these read RPRY and KGK. Residues Lys-53, Glu-69, and Glu-73 each coordinate Mg(2+). Positions 54-75 match the Nudix box motif; that stretch reads GKVDPGETAPVGAVREILEETG. Substrate contacts are provided by Tyr-89, Lys-99, Glu-118, and Tyr-136. Glu-118 is a Mg(2+) binding site.

Belongs to the Nudix hydrolase family. Requires Mg(2+) as cofactor.

It catalyses the reaction 8-oxo-dGTP + H2O = 8-oxo-dGDP + phosphate + H(+). The catalysed reaction is 8-oxo-GTP + H2O = 8-oxo-GDP + phosphate + H(+). Its function is as follows. Catalyzes the conversion of 8-oxo-dGTP to 8-oxo-dGDP, and 8-oxo-GTP to 8-oxo-GDP. The sequence is that of 8-oxo-(d)GTP phosphatase from Mycobacterium tuberculosis (strain CDC 1551 / Oshkosh).